The primary structure comprises 561 residues: Putative transport protein YbjL (561 aa).

Helical transmembrane passes span Leu-8–Gly-28, Leu-32–Gln-52, Phe-66–Phe-86, Met-94–Phe-114, and Asn-158–Ala-178. RCK C-terminal domains follow at residues Arg-200 to Asn-288 and Val-292 to Phe-373. The next 5 membrane-spanning stretches (helical) occupy residues Leu-383–Phe-403, Phe-406–Leu-426, Phe-447–Gly-467, Met-475–Ala-495, and Gly-537–Trp-557.

Belongs to the AAE transporter (TC 2.A.81) family. YbjL subfamily.

The protein resides in the cell membrane. In Salmonella choleraesuis (strain SC-B67), this protein is Putative transport protein YbjL.